The primary structure comprises 1105 residues: ATP-dependent DNA helicase MPH1 (1105 aa).

The region spanning 94–261 (IVQRAFYDNL…EIIDNLSISK (168 aa)) is the Helicase ATP-binding domain. Position 107–114 (107–114 (LPTGLGKT)) interacts with ATP. The short motif at 209–212 (DEAH) is the DEAH box element. In terms of domain architecture, Helicase C-terminal spans 468–641 (SIERIGSNLR…LITLAQSNRI (174 aa)). Disordered stretches follow at residues 493-534 (EEAY…AQIK), 684-708 (KGKK…EKRF), 758-824 (IQSK…PKLG), 850-880 (LVTG…ECAP), and 918-953 (VSDD…FDEG). Basic residues predominate over residues 499–511 (KGKKGRTKGKATK). Over residues 518-532 (TPERSTSRTSSEDAQ) the composition is skewed to basic and acidic residues. The span at 684–705 (KGKKVTKSKSKSKSNSKSKKIE) shows a compositional bias: basic residues. Basic and acidic residues predominate over residues 764–787 (PVKENQSKRPNSEHICEEDSRQET). Low complexity predominate over residues 788–799 (ENNSNESNGSFE). Positions 927–943 (DSINNQQLHKNKNLGST) are enriched in polar residues. Residues 944 to 953 (SDDDDAFDEG) are compositionally biased toward acidic residues.

This sequence belongs to the DEAD box helicase family. DEAH subfamily. FANCM sub-subfamily. Interacts with the MHF histone-fold complex to form the FANCM-MHF complex.

The protein resides in the nucleus. The enzyme catalyses ATP + H2O = ADP + phosphate + H(+). ATP-dependent DNA helicase involved in DNA damage repair by homologous recombination and in genome maintenance. Capable of unwinding D-loops. Plays a role in limiting crossover recombinants during mitotic DNA double-strand break (DSB) repair. Component of a FANCM-MHF complex which promotes gene conversion at blocked replication forks, probably by reversal of the stalled fork. The protein is ATP-dependent DNA helicase MPH1 of Debaryomyces hansenii (strain ATCC 36239 / CBS 767 / BCRC 21394 / JCM 1990 / NBRC 0083 / IGC 2968) (Yeast).